Reading from the N-terminus, the 198-residue chain is Snake venom metalloproteinase neuwiedase (198 aa).

The region spanning 8-198 (RYIELVIVAD…QTFLTNHNPQ (191 aa)) is the Peptidase M12B domain. 2 residues coordinate Ca(2+): Glu-11 and Asp-95. His-144 provides a ligand contact to Zn(2+). Residue Glu-145 is part of the active site. Zn(2+)-binding residues include His-148 and His-154. 2 disulfide bridges follow: Cys-159/Cys-183 and Cys-161/Cys-166.

Belongs to the venom metalloproteinase (M12B) family. P-I subfamily. It depends on Zn(2+) as a cofactor. In terms of tissue distribution, expressed by the venom gland.

The protein localises to the secreted. Its activity is regulated as follows. Inhibited by EDTA, EGTA and 1,10-phenanthroline, partially inhibited by beta-mercaptoethanol and not inhibited by serine protease inhibitors (leupeptin and aprotinin). Also inhibited by an excess of zinc, mercury and magnesium ions. Extracts of the plant Casearia mariquitensis neutralizes the decrease of platelets and plasma fibrinogen induced by the protease. The same extracts also partially inhibit Bbeta chain cleavage, but not Aalpha chain cleavage. In terms of biological role, this metalloprotease hydrolyzes the Aalpha chain of fibrin and fibrinogen first followed by the Bbeta chain and shows no effect on the gamma chain. It is also able to degrade type I collagen, fibronectin, laminin and induces inflammatory reaction. It is devoid of hemorrhagic and thrombotic activities, except in lung where it induces pulmonary bleeding. It also induces a mild myotoxic reaction. It is not able to inhibit platelet aggregation, but it induces decrease of platelets and plasma fibrinogen. It contributes to local tissue damage by inducing edema, inflammatory infiltrate and mild myotoxicity, and by degrading extracellular matrix components. This chain is Snake venom metalloproteinase neuwiedase, found in Bothrops pauloensis (Neuwied's lancehead).